A 325-amino-acid polypeptide reads, in one-letter code: Exogastrula-inducing polypeptide (325 aa).

The signal sequence occupies residues 1–19 (MKVSLVLLIAVFGLAMVAA). The propeptide occupies 20–45 (EETLESKLQMALKSLLQENEELNLEG). 2 consecutive EGF-like domains span residues 48 to 91 (TKGG…SSCY) and 107 to 154 (TVAR…GGCS). Intrachain disulfides connect C52/C65, C59/C75, C77/C90, C111/C124, C118/C138, and C140/C153. The propeptide occupies 160-177 (ELEYLSYVARDVEMEMLA). The region spanning 180–226 (SVYQCNRDTNSCDGFGKCEKSTFGRTTGQYICNCDDGYRNNAYGGCS) is the EGF-like 3 domain. Disulfide bonds link C184/C197, C191/C211, and C213/C225. Positions 232–249 (EIEYLSMIARDQELEMQA) are excised as a propeptide. In terms of domain architecture, EGF-like 4 spans 252-298 (SLPQCNRDTNYCDGFGQCVKSTFGRTTGQYICSCNDGYENNLYGGCS). 3 disulfide bridges follow: C256-C269, C263-C283, and C285-C297. A propeptide spanning residues 313–325 (MEILRSLANLLEE) is cleaved from the precursor.

It localises to the secreted. The protein localises to the extracellular space. Its subcellular location is the extracellular matrix. The EGIP peptides are factors effective to extrude the archenteron toward outside of embryos. May have a role in the induction of gastrulation. The polypeptide is Exogastrula-inducing polypeptide (Heliocidaris crassispina (Sea urchin)).